A 61-amino-acid polypeptide reads, in one-letter code: Small ribosomal subunit protein uS14 (61 aa).

The Zn(2+) site is built by cysteine 24, cysteine 27, cysteine 40, and cysteine 43.

Belongs to the universal ribosomal protein uS14 family. Zinc-binding uS14 subfamily. As to quaternary structure, part of the 30S ribosomal subunit. Contacts proteins S3 and S10. It depends on Zn(2+) as a cofactor.

In terms of biological role, binds 16S rRNA, required for the assembly of 30S particles and may also be responsible for determining the conformation of the 16S rRNA at the A site. In Thermodesulfovibrio yellowstonii (strain ATCC 51303 / DSM 11347 / YP87), this protein is Small ribosomal subunit protein uS14.